Reading from the N-terminus, the 472-residue chain is ATP synthase subunit beta (472 aa).

An ATP-binding site is contributed by 149–156 (GGAGVGKT).

It belongs to the ATPase alpha/beta chains family. As to quaternary structure, F-type ATPases have 2 components, CF(1) - the catalytic core - and CF(0) - the membrane proton channel. CF(1) has five subunits: alpha(3), beta(3), gamma(1), delta(1), epsilon(1). CF(0) has three main subunits: a(1), b(2) and c(9-12). The alpha and beta chains form an alternating ring which encloses part of the gamma chain. CF(1) is attached to CF(0) by a central stalk formed by the gamma and epsilon chains, while a peripheral stalk is formed by the delta and b chains.

The protein localises to the cell inner membrane. The catalysed reaction is ATP + H2O + 4 H(+)(in) = ADP + phosphate + 5 H(+)(out). In terms of biological role, produces ATP from ADP in the presence of a proton gradient across the membrane. The catalytic sites are hosted primarily by the beta subunits. This Pelagibacter ubique (strain HTCC1062) protein is ATP synthase subunit beta.